Here is a 119-residue protein sequence, read N- to C-terminus: ATP-dependent Clp protease adapter protein ClpS (119 aa).

It belongs to the ClpS family. Binds to the N-terminal domain of the chaperone ClpA.

Functionally, involved in the modulation of the specificity of the ClpAP-mediated ATP-dependent protein degradation. In Marinobacter nauticus (strain ATCC 700491 / DSM 11845 / VT8) (Marinobacter aquaeolei), this protein is ATP-dependent Clp protease adapter protein ClpS.